The chain runs to 428 residues: tRNA modification GTPase MnmE (428 aa).

Residues R20, E77, and K117 each contribute to the (6S)-5-formyl-5,6,7,8-tetrahydrofolate site. A TrmE-type G domain is found at 213-351 (GFEIALVGAP…LLEKIRSVFS (139 aa)). K(+) is bound at residue N223. Residues 223–228 (NAGKST), 242–248 (SEIAGTT), and 267–270 (DTAG) contribute to the GTP site. S227 contributes to the Mg(2+) binding site. K(+)-binding residues include S242, I244, and T247. T248 contributes to the Mg(2+) binding site. Residue K428 participates in (6S)-5-formyl-5,6,7,8-tetrahydrofolate binding.

Belongs to the TRAFAC class TrmE-Era-EngA-EngB-Septin-like GTPase superfamily. TrmE GTPase family. As to quaternary structure, homodimer. Heterotetramer of two MnmE and two MnmG subunits. K(+) serves as cofactor.

The protein resides in the cytoplasm. Its function is as follows. Exhibits a very high intrinsic GTPase hydrolysis rate. Involved in the addition of a carboxymethylaminomethyl (cmnm) group at the wobble position (U34) of certain tRNAs, forming tRNA-cmnm(5)s(2)U34. The chain is tRNA modification GTPase MnmE from Roseobacter denitrificans (strain ATCC 33942 / OCh 114) (Erythrobacter sp. (strain OCh 114)).